Here is a 423-residue protein sequence, read N- to C-terminus: Putative serpin-Z12 (423 aa).

The interval 1–25 is disordered; the sequence is MAALAAGEPFSGRATGGDGGVRSDV. The segment at 370-394 is RCL; the sequence is GTVAAASTAVVMMQKGSSLPPVDFV.

It belongs to the serpin family.

Probable serine protease inhibitor. The chain is Putative serpin-Z12 from Oryza sativa subsp. japonica (Rice).